Reading from the N-terminus, the 199-residue chain is Recombination protein RecR (199 aa).

Residues 57 to 72 (CQSCRTYTEESLCPIC) form a C4-type zinc finger. The 96-residue stretch at 81–176 (STICVVETPA…VISRIAHGVP (96 aa)) folds into the Toprim domain.

This sequence belongs to the RecR family.

Functionally, may play a role in DNA repair. It seems to be involved in an RecBC-independent recombinational process of DNA repair. It may act with RecF and RecO. The protein is Recombination protein RecR of Shewanella sp. (strain ANA-3).